Here is a 509-residue protein sequence, read N- to C-terminus: 3-isopropylmalate dehydratase large subunit, chloroplastic (509 aa).

The segment covering 1–24 (MASVISSSPFLCKSSSKSDLGISS) has biased composition (low complexity). Positions 1 to 25 (MASVISSSPFLCKSSSKSDLGISSF) are disordered. The transit peptide at 1 to 47 (MASVISSSPFLCKSSSKSDLGISSFPKSSQISIHRCQKKSISRKIVS) directs the protein to the chloroplast. [4Fe-4S] cluster-binding residues include Cys376, Cys445, and Cys448.

The protein belongs to the aconitase/IPM isomerase family. As to quaternary structure, heterodimer of the large LEUC/IIL1 subunit and the small LEUD (SSU1, SSU2 or SSU3) subunits. [4Fe-4S] cluster serves as cofactor. In terms of tissue distribution, expressed in roots, leaves, stems and flowers. Expressed at low levels in siliques.

The protein localises to the plastid. The protein resides in the chloroplast stroma. The catalysed reaction is (2R,3S)-3-isopropylmalate = (2S)-2-isopropylmalate. It carries out the reaction a 2-(omega-methylsulfanyl)alkylmalate = a 2-(omega-methylsulfanyl)alkylmaleate + H2O. It catalyses the reaction 2-(3-methylsulfanyl)propylmalate = 2-(2-methylsulfanyl)propylmaleate + H2O. The enzyme catalyses a 3-(omega-methylsulfanyl)alkylmalate = a 2-(omega-methylsulfanyl)alkylmaleate + H2O. The catalysed reaction is 2-(2-methylsulfanyl)ethylmalate = 2-(2-methylsulfanyl)ethylmaleate + H2O. It carries out the reaction 3-(2-methylsulfanyl)ethylmalate = 2-(2-methylsulfanyl)ethylmaleate + H2O. It catalyses the reaction 3-(3-methylsulfanyl)propylmalate = 2-(2-methylsulfanyl)propylmaleate + H2O. It functions in the pathway amino-acid biosynthesis; L-leucine biosynthesis; L-leucine from 3-methyl-2-oxobutanoate: step 2/4. Its function is as follows. Catalyzes the isomerization between 2-isopropylmalate and 3-isopropylmalate, via the formation of 2-isopropylmaleate. Functions in both the biosynthesis of leucine and in the methionine chain elongation pathway of aliphatic glucosinolate formation. The sequence is that of 3-isopropylmalate dehydratase large subunit, chloroplastic from Arabidopsis thaliana (Mouse-ear cress).